A 140-amino-acid polypeptide reads, in one-letter code: Non-specific lipid transfer protein GPI-anchored 33 (140 aa).

The N-terminal stretch at 1–27 (MAYTNKVTISAAVATMMLFLAVTIVDA) is a signal peptide. Intrachain disulfides connect Cys40-Cys80, Cys52-Cys64, Cys65-Cys104, and Cys78-Cys112. A glycan (N-linked (GlcNAc...) asparagine) is linked at Asn91. A lipid anchor (GPI-anchor amidated glycine) is attached at Gly115. Positions 116–140 (DASGGSTNKIAASMVLLGLVASLFF) are cleaved as a propeptide — removed in mature form.

Belongs to the plant LTP family.

Its subcellular location is the cell membrane. Functionally, probable lipid transfer protein. This chain is Non-specific lipid transfer protein GPI-anchored 33, found in Arabidopsis thaliana (Mouse-ear cress).